Here is a 220-residue protein sequence, read N- to C-terminus: Ras-related protein Rab-3A (220 aa).

Residues S31, S32, V33, G34, K35, T36, S37, T48, P49, S53, and T54 each contribute to the GTP site. Mg(2+) is bound at residue T36. The Switch 1 signature appears at 49–58 (PAFVSTVGID). Mg(2+)-binding residues include T54 and D77. G80 serves as a coordination point for GTP. The Switch 2 motif lies at 80-96 (GQERYRTITTAYYRGAM). The residue at position 86 (T86) is a Phosphothreonine; by LRRK2. Residues N135, K136, D138, A166, and K167 each coordinate GTP. 2 positions are modified to phosphoserine: S188 and S190. The interval 194 to 220 (ADPAVTGAKQGPQLSDQQVPPHQDCAC) is disordered. S-geranylgeranyl cysteine attachment occurs at residues C218 and C220. A Cysteine methyl ester modification is found at C220.

The protein belongs to the small GTPase superfamily. Rab family. In terms of assembly, interacts with RIMS1 and RIMS2. Interacts with Rabphilin-3A/RPH3A and Rab effector Noc2/RPH3AL. Interacts with SYTL4. Interacts with RAB3IP. Interacts with SGSM1 and SGSM3. Interacts with SYT1. Interacts with MYH9; this interaction is essential for lysosome exocytosis and plasma membrane repair. Interacts with STXBP1; this interaction promotes RAB3A dissociation from the vesicle membrane. Interacts with SNCA. The GTP-bound form interacts with REP15. Interacts with GDI1, GDI2, CHM and CHML; phosphorylation at Thr-86 disrupts these interactions. Interacts with MADD (via uDENN domain); the GTP-bound form is preferred for interaction. Mg(2+) serves as cofactor. Phosphorylation of Thr-86 in the switch II region by LRRK2 prevents the association of RAB regulatory proteins, including CHM, CHML and RAB GDP dissociation inhibitors GDI1 and GDI2. As to expression, specifically expressed in brain.

Its subcellular location is the cytoplasm. The protein localises to the cytosol. The protein resides in the lysosome. It is found in the cytoplasmic vesicle. It localises to the secretory vesicle. Its subcellular location is the cell projection. The protein localises to the axon. The protein resides in the cell membrane. It is found in the presynapse. It localises to the postsynapse. The catalysed reaction is GTP + H2O = GDP + phosphate + H(+). Regulated by guanine nucleotide exchange factors (GEFs) including RAB3IL1 and MADD which promote the exchange of bound GDP for free GTP. Regulated by GTPase activating proteins (GAPs) including RAB3GAP1 and TBC1D10B which increase the GTP hydrolysis activity. Inhibited by GDP dissociation inhibitors (GDIs) which prevent Rab-GDP dissociation. In terms of biological role, the small GTPases Rab are key regulators of intracellular membrane trafficking, from the formation of transport vesicles to their fusion with membranes. Rabs cycle between an inactive GDP-bound form and an active GTP-bound form that is able to recruit to membranes different sets of downstream effectors directly responsible for vesicle formation, movement, tethering and fusion. RAB3A plays a central role in regulated exocytosis and secretion. Controls the recruitment, tethering and docking of secretory vesicles to the plasma membrane. Upon stimulation, switches to its active GTP-bound form, cycles to vesicles and recruits effectors such as RIMS1, RIMS2, Rabphilin-3A/RPH3A, RPH3AL or SYTL4 to help the docking of vesicules onto the plasma membrane. Upon GTP hydrolysis by GTPase-activating protein, dissociates from the vesicle membrane allowing the exocytosis to proceed. Stimulates insulin secretion through interaction with RIMS2 or RPH3AL effectors in pancreatic beta cells. Regulates calcium-dependent lysosome exocytosis and plasma membrane repair (PMR) via the interaction with 2 effectors, SYTL4 and myosin-9/MYH9. Acts as a positive regulator of acrosome content secretion in sperm cells by interacting with RIMS1. Also plays a role in the regulation of dopamine release by interacting with synaptotagmin I/SYT. This Homo sapiens (Human) protein is Ras-related protein Rab-3A.